Consider the following 179-residue polypeptide: Large ribosomal subunit protein uL5 (179 aa).

This sequence belongs to the universal ribosomal protein uL5 family. In terms of assembly, part of the 50S ribosomal subunit; part of the 5S rRNA/L5/L18/L25 subcomplex. Contacts the 5S rRNA and the P site tRNA. Forms a bridge to the 30S subunit in the 70S ribosome.

Functionally, this is one of the proteins that bind and probably mediate the attachment of the 5S RNA into the large ribosomal subunit, where it forms part of the central protuberance. In the 70S ribosome it contacts protein S13 of the 30S subunit (bridge B1b), connecting the 2 subunits; this bridge is implicated in subunit movement. Contacts the P site tRNA; the 5S rRNA and some of its associated proteins might help stabilize positioning of ribosome-bound tRNAs. This Clostridium perfringens (strain ATCC 13124 / DSM 756 / JCM 1290 / NCIMB 6125 / NCTC 8237 / Type A) protein is Large ribosomal subunit protein uL5.